The following is a 410-amino-acid chain: ACT domain-containing protein ACR10 (410 aa).

3 ACT domains span residues Val-22–Gln-105, Leu-114–Pro-197, and Leu-245–Met-324.

Functionally, may bind amino acids. The chain is ACT domain-containing protein ACR10 from Arabidopsis thaliana (Mouse-ear cress).